The primary structure comprises 449 residues: Exodeoxyribonuclease 7 large subunit (449 aa).

It belongs to the XseA family. In terms of assembly, heterooligomer composed of large and small subunits.

The protein resides in the cytoplasm. The enzyme catalyses Exonucleolytic cleavage in either 5'- to 3'- or 3'- to 5'-direction to yield nucleoside 5'-phosphates.. In terms of biological role, bidirectionally degrades single-stranded DNA into large acid-insoluble oligonucleotides, which are then degraded further into small acid-soluble oligonucleotides. The sequence is that of Exodeoxyribonuclease 7 large subunit from Salmonella typhi.